A 291-amino-acid polypeptide reads, in one-letter code: Segregation and condensation protein A (291 aa).

Belongs to the ScpA family. As to quaternary structure, component of a cohesin-like complex composed of ScpA, ScpB and the Smc homodimer, in which ScpA and ScpB bind to the head domain of Smc. The presence of the three proteins is required for the association of the complex with DNA.

It localises to the cytoplasm. In terms of biological role, participates in chromosomal partition during cell division. May act via the formation of a condensin-like complex containing Smc and ScpB that pull DNA away from mid-cell into both cell halves. The protein is Segregation and condensation protein A of Malacoplasma penetrans (strain HF-2) (Mycoplasma penetrans).